Here is an 841-residue protein sequence, read N- to C-terminus: DNA mismatch repair protein MutS (841 aa).

596 to 603 (GPNMSGKS) is an ATP binding site.

The protein belongs to the DNA mismatch repair MutS family.

In terms of biological role, this protein is involved in the repair of mismatches in DNA. It is possible that it carries out the mismatch recognition step. This protein has a weak ATPase activity. The chain is DNA mismatch repair protein MutS from Acholeplasma laidlawii (strain PG-8A).